Reading from the N-terminus, the 497-residue chain is Glucose-6-phosphate 1-dehydrogenase (497 aa).

Residues 15-22, R49, and K153 contribute to the NADP(+) site; that span reads GASGDLSK. D-glucose 6-phosphate-binding positions include K153, 183–187, E221, and D240; that span reads HYLGK. H245 (proton acceptor) is an active-site residue. R336 contributes to the NADP(+) binding site. K339 contributes to the D-glucose 6-phosphate binding site. NADP(+) is bound by residues K345, R349, and R371. Q373 contacts D-glucose 6-phosphate. NADP(+) is bound by residues 379-381, 399-401, and R466; these read YLK and DLT.

The protein belongs to the glucose-6-phosphate dehydrogenase family.

The catalysed reaction is D-glucose 6-phosphate + NADP(+) = 6-phospho-D-glucono-1,5-lactone + NADPH + H(+). Its pathway is carbohydrate degradation; pentose phosphate pathway; D-ribulose 5-phosphate from D-glucose 6-phosphate (oxidative stage): step 1/3. Its function is as follows. Catalyzes the rate-limiting step of the oxidative pentose-phosphate pathway, which represents a route for the dissimilation of carbohydrates besides glycolysis. The main function of this enzyme is to provide reducing power (NADPH) and pentose phosphates for fatty acid and nucleic acid synthesis. The protein is Glucose-6-phosphate 1-dehydrogenase (ZWF) of Kluyveromyces lactis (strain ATCC 8585 / CBS 2359 / DSM 70799 / NBRC 1267 / NRRL Y-1140 / WM37) (Yeast).